A 177-amino-acid polypeptide reads, in one-letter code: Coatomer subunit zeta-1 (177 aa).

Belongs to the adaptor complexes small subunit family. Oligomeric complex that consists of at least the alpha, beta, beta', gamma, delta, epsilon and zeta subunits.

The protein resides in the cytoplasm. Its subcellular location is the golgi apparatus membrane. It localises to the cytoplasmic vesicle. The protein localises to the COPI-coated vesicle membrane. The coatomer is a cytosolic protein complex that binds to dilysine motifs and reversibly associates with Golgi non-clathrin-coated vesicles, which further mediate biosynthetic protein transport from the ER, via the Golgi up to the trans Golgi network. Coatomer complex is required for budding from Golgi membranes, and is essential for the retrograde Golgi-to-ER transport of dilysine-tagged proteins. The zeta subunit may be involved in regulating the coat assembly and, hence, the rate of biosynthetic protein transport due to its association-dissociation properties with the coatomer complex. The chain is Coatomer subunit zeta-1 from Arabidopsis thaliana (Mouse-ear cress).